Consider the following 353-residue polypeptide: Alanine racemase (353 aa).

The Proton acceptor; specific for D-alanine role is filled by Lys33. Residue Lys33 is modified to N6-(pyridoxal phosphate)lysine. Arg129 contributes to the substrate binding site. The active-site Proton acceptor; specific for L-alanine is the Tyr250. Met298 serves as a coordination point for substrate.

The protein belongs to the alanine racemase family. The cofactor is pyridoxal 5'-phosphate.

It catalyses the reaction L-alanine = D-alanine. The protein operates within amino-acid biosynthesis; D-alanine biosynthesis; D-alanine from L-alanine: step 1/1. Catalyzes the interconversion of L-alanine and D-alanine. May also act on other amino acids. This chain is Alanine racemase (alr), found in Aromatoleum aromaticum (strain DSM 19018 / LMG 30748 / EbN1) (Azoarcus sp. (strain EbN1)).